We begin with the raw amino-acid sequence, 101 residues long: Ubiquitin-related modifier 1 homolog (101 aa).

The residue at position 101 (glycine 101) is a 1-thioglycine. Residue glycine 101 forms a Glycyl lysine isopeptide (Gly-Lys) (interchain with K-? in acceptor proteins) linkage.

This sequence belongs to the URM1 family. In terms of assembly, interacts with cer. In terms of processing, C-terminal thiocarboxylation occurs in 2 steps, it is first acyl-adenylated (-COAMP) via the hesA/moeB/thiF part of the MOCS3 homolog, then thiocarboxylated (-COSH) via the rhodanese domain of the MOCS3 homolog.

The protein localises to the cytoplasm. It functions in the pathway tRNA modification; 5-methoxycarbonylmethyl-2-thiouridine-tRNA biosynthesis. Its function is as follows. Acts as a sulfur carrier required for 2-thiolation of mcm(5)S(2)U at tRNA wobble positions of cytosolic tRNA(Lys), tRNA(Glu) and tRNA(Gln). Serves as sulfur donor in tRNA 2-thiolation reaction by being thiocarboxylated (-COSH) at its C-terminus by MOCS3. The sulfur is then transferred to tRNA to form 2-thiolation of mcm(5)S(2)U. Also acts as a ubiquitin-like protein (UBL) that is covalently conjugated via an isopeptide bond to lysine residues of target proteins such as Prx2/Jafrac1, Ciao1, Eip71CD and GILT1. The thiocarboxylated form serves as substrate for conjugation and oxidative stress specifically induces the formation of UBL-protein conjugates. This chain is Ubiquitin-related modifier 1 homolog, found in Drosophila yakuba (Fruit fly).